The chain runs to 1434 residues: Inositol hexakisphosphate and diphosphoinositol-pentakisphosphate kinase 1 (1434 aa).

Substrate is bound at residue 66 to 67 (KK). ATP is bound by residues arginine 147, lysine 200, histidine 207, arginine 226, 250-253 (EEFM), and 259-261 (DVK). Residue 226–227 (RK) participates in substrate binding. The substrate site is built by lysine 261 and arginine 275. ATP contacts are provided by residues serine 277, aspartate 322, and 334–336 (DVN). 339 to 342 (SFVK) lines the substrate pocket. The tract at residues 384-455 (PTTSGTMMEL…VLDITRLLLA (72 aa)) is polyphosphoinositide-binding domain. The disordered stretch occupies residues 916-1017 (EGSAPAGCGF…PTEMKQSGLG (102 aa)). Phosphoserine occurs at positions 941 and 984. The segment covering 1002 to 1017 (FSSSRPPTEMKQSGLG) has biased composition (polar residues). 4 positions are modified to phosphoserine: serine 1034, serine 1070, serine 1142, and serine 1149. Disordered stretches follow at residues 1133–1193 (NHQA…GFSD), 1228–1251 (ESTQ…DTEV), and 1396–1434 (TDNP…EDIS). Low complexity predominate over residues 1165–1183 (SSGPSSTVSSAGPSSPTTV). The span at 1403–1434 (LSEETDLQAQEVSEEIDQEPEVVDELSNEDIS) shows a compositional bias: acidic residues.

It belongs to the histidine acid phosphatase family. VIP1 subfamily.

The protein resides in the cytoplasm. It localises to the cytosol. Its subcellular location is the cell membrane. It catalyses the reaction 1D-myo-inositol hexakisphosphate + ATP = 1-diphospho-1D-myo-inositol 2,3,4,5,6-pentakisphosphate + ADP. The enzyme catalyses 5-diphospho-1D-myo-inositol 1,2,3,4,6-pentakisphosphate + ATP + H(+) = 1,5-bis(diphospho)-1D-myo-inositol 2,3,4,6-tetrakisphosphate + ADP. Bifunctional inositol kinase that acts in concert with the IP6K kinases IP6K1, IP6K2 and IP6K3 to synthesize the diphosphate group-containing inositol pyrophosphates diphosphoinositol pentakisphosphate, PP-InsP5, and bis-diphosphoinositol tetrakisphosphate, (PP)2-InsP4. PP-InsP5 and (PP)2-InsP4, also respectively called InsP7 and InsP8, regulate a variety of cellular processes, including apoptosis, vesicle trafficking, cytoskeletal dynamics, exocytosis, insulin signaling and neutrophil activation. Phosphorylates inositol hexakisphosphate (InsP6) at position 1 to produce PP-InsP5 which is in turn phosphorylated by IP6Ks to produce (PP)2-InsP4. Alternatively, phosphorylates PP-InsP5 at position 1, produced by IP6Ks from InsP6, to produce (PP)2-InsP4. Activated when cells are exposed to hyperosmotic stress. In Rattus norvegicus (Rat), this protein is Inositol hexakisphosphate and diphosphoinositol-pentakisphosphate kinase 1.